The chain runs to 245 residues: tRNA pseudouridine synthase A (245 aa).

Catalysis depends on D52, which acts as the Nucleophile. Y110 contacts substrate.

It belongs to the tRNA pseudouridine synthase TruA family. As to quaternary structure, homodimer.

The catalysed reaction is uridine(38/39/40) in tRNA = pseudouridine(38/39/40) in tRNA. In terms of biological role, formation of pseudouridine at positions 38, 39 and 40 in the anticodon stem and loop of transfer RNAs. The sequence is that of tRNA pseudouridine synthase A from Borrelia turicatae (strain 91E135).